Reading from the N-terminus, the 102-residue chain is Integration host factor subunit alpha (102 aa).

Belongs to the bacterial histone-like protein family. As to quaternary structure, heterodimer of an alpha and a beta chain.

In terms of biological role, this protein is one of the two subunits of integration host factor, a specific DNA-binding protein that functions in genetic recombination as well as in transcriptional and translational control. The polypeptide is Integration host factor subunit alpha (Paracoccus denitrificans (strain Pd 1222)).